The following is a 493-amino-acid chain: Glutamate--tRNA ligase (493 aa).

The short motif at 10-20 is the 'HIGH' region element; it reads PSPTGDPHVGT. A 'KMSKS' region motif is present at residues 251–255; the sequence is KLSKR. Lysine 254 serves as a coordination point for ATP.

This sequence belongs to the class-I aminoacyl-tRNA synthetase family. Glutamate--tRNA ligase type 1 subfamily. Monomer.

It is found in the cytoplasm. The enzyme catalyses tRNA(Glu) + L-glutamate + ATP = L-glutamyl-tRNA(Glu) + AMP + diphosphate. Catalyzes the attachment of glutamate to tRNA(Glu) in a two-step reaction: glutamate is first activated by ATP to form Glu-AMP and then transferred to the acceptor end of tRNA(Glu). The polypeptide is Glutamate--tRNA ligase (Pseudomonas syringae pv. syringae (strain B728a)).